Consider the following 454-residue polypeptide: tRNA modification GTPase MnmE (454 aa).

(6S)-5-formyl-5,6,7,8-tetrahydrofolate-binding residues include R23, E80, and K120. The TrmE-type G domain maps to 216 to 377 (GMKVVIAGRP…LRDHLKQSMG (162 aa)). N226 serves as a coordination point for K(+). GTP contacts are provided by residues 226 to 231 (NAGKSS), 245 to 251 (TDIAGTT), 270 to 273 (DTAG), 335 to 338 (NKAD), and 358 to 360 (SAR). S230 provides a ligand contact to Mg(2+). K(+) is bound by residues T245, I247, and T250. T251 serves as a coordination point for Mg(2+). K454 is a (6S)-5-formyl-5,6,7,8-tetrahydrofolate binding site.

Belongs to the TRAFAC class TrmE-Era-EngA-EngB-Septin-like GTPase superfamily. TrmE GTPase family. In terms of assembly, homodimer. Heterotetramer of two MnmE and two MnmG subunits. Requires K(+) as cofactor.

The protein localises to the cytoplasm. Functionally, exhibits a very high intrinsic GTPase hydrolysis rate. Involved in the addition of a carboxymethylaminomethyl (cmnm) group at the wobble position (U34) of certain tRNAs, forming tRNA-cmnm(5)s(2)U34. The protein is tRNA modification GTPase MnmE of Yersinia pestis.